The primary structure comprises 497 residues: MSISIETITKRNQYRVDQPQRQPSRLSTVASISEYQSDYSKTVFEEIELEVIPNKQNISTRSFRNDGNDSDPQTLDPDAYPPKRSIAFVLLNSILSDMSMSTALPISAAYTEILGGTDAFSGLVIGIPTMISLVCLYPMLRFANPKSANGYTLYFRPLIVSCISQIIGHLLYSLAYRAQWLYLILIGRMCNGVGFTMFLYHKKYLTDKHFVGQNRSTFLATLNILAQTVGFMAGSFLGGLLAKACMHLTNPIWNQYTVGSWFMLFAWCIYGILLSIFFKEIRADGNDSSARKPENFNGQAVKLSYTHKFMLVFLSMVAFISYFNIAGYQASVPIYAKELYHYNAFQSGNFLSLSALVIAPLVFLSTFLSKWAEDRDMMLYGFILGILALVVHLVLDVLHKVRVQPYFVLYSAMQFGFSIGSAPLISLATKQLHPKYHILVGIIVQIGISAADTVGAICGGAIFDITTVGFIALNLGIAVLVFIQLLFLWNSIKTKTG.

The interval 58–79 (ISTRSFRNDGNDSDPQTLDPDA) is disordered. The next 12 helical transmembrane spans lie at 86–106 (IAFV…ALPI), 120–140 (FSGL…YPML), 155–175 (FRPL…YSLA), 180–200 (WLYL…MFLY), 222–242 (LNIL…GLLA), 258–278 (VGSW…SIFF), 309–329 (FMLV…AGYQ), 348–368 (GNFL…STFL), 378–398 (MLYG…LDVL), 407–427 (FVLY…LISL), 438–458 (ILVG…GAIC), and 468–488 (VGFI…LLFL).

The protein belongs to the major facilitator superfamily.

It is found in the membrane. This is an uncharacterized protein from Schizosaccharomyces pombe (strain 972 / ATCC 24843) (Fission yeast).